The chain runs to 302 residues: Probable alpha-L-glutamate ligase 1 (302 aa).

Positions 104-287 constitute an ATP-grasp domain; sequence MQLLSRKGIG…VANMIIEFIE (184 aa). ATP-binding positions include Lys141, 178 to 179, Asp187, and 211 to 213; these read EY and RSN. Mg(2+) contacts are provided by Asp248, Glu260, and Asn262. Mn(2+)-binding residues include Asp248, Glu260, and Asn262.

The protein belongs to the RimK family. Requires Mg(2+) as cofactor. The cofactor is Mn(2+).

This chain is Probable alpha-L-glutamate ligase 1, found in Pseudoalteromonas atlantica (strain T6c / ATCC BAA-1087).